The following is a 147-amino-acid chain: Phospholipase A2 SSD387 (147 aa).

Positions Met-1–Ala-19 are cleaved as a signal peptide. The propeptide occupies Ile-20–Arg-28. Intrachain disulfides connect Cys-55–Cys-71, Cys-70–Cys-130, Cys-77–Cys-123, Cys-86–Cys-116, and Cys-109–Cys-121. Ca(2+)-binding residues include Gly-56 and Gly-58. His-74 is a catalytic residue. Ca(2+) is bound at residue Asp-75. Asp-124 is a catalytic residue.

It depends on Ca(2+) as a cofactor. In terms of tissue distribution, expressed by the venom gland.

It localises to the secreted. It carries out the reaction a 1,2-diacyl-sn-glycero-3-phosphocholine + H2O = a 1-acyl-sn-glycero-3-phosphocholine + a fatty acid + H(+). Its function is as follows. PLA2 catalyzes the calcium-dependent hydrolysis of the 2-acyl groups in 3-sn-phosphoglycerides. This chain is Phospholipase A2 SSD387, found in Scolopendra dehaani (Thai centipede).